The following is a 179-amino-acid chain: Large ribosomal subunit protein uL5 (179 aa).

This sequence belongs to the universal ribosomal protein uL5 family. In terms of assembly, part of the 50S ribosomal subunit; part of the 5S rRNA/L5/L18/L25 subcomplex. Contacts the 5S rRNA and the P site tRNA. Forms a bridge to the 30S subunit in the 70S ribosome.

This is one of the proteins that bind and probably mediate the attachment of the 5S RNA into the large ribosomal subunit, where it forms part of the central protuberance. In the 70S ribosome it contacts protein S13 of the 30S subunit (bridge B1b), connecting the 2 subunits; this bridge is implicated in subunit movement. Contacts the P site tRNA; the 5S rRNA and some of its associated proteins might help stabilize positioning of ribosome-bound tRNAs. The sequence is that of Large ribosomal subunit protein uL5 from Shewanella pealeana (strain ATCC 700345 / ANG-SQ1).